A 474-amino-acid chain; its full sequence is ABHD16B (474 aa).

Positions 175-295 (VICCEGNAGF…QSWKGLVVRT (121 aa)) constitute an AB hydrolase-1 domain. Residues Ser248, Asp323, and His423 each act as charge relay system in the active site.

The protein belongs to the AB hydrolase superfamily. ABHD16 family. As to expression, expressed in most tissues, with highest expression found in the testes, skeletal muscle, and brown adipose tissue.

It carries out the reaction a 1,2-diacyl-sn-glycero-3-phospho-L-serine + H2O = a 2-acyl-sn-glycero-3-phospho-L-serine + a fatty acid + H(+). It catalyses the reaction a 1-acylglycerol + H2O = glycerol + a fatty acid + H(+). The catalysed reaction is 1-(9Z-octadecenoyl)-glycerol + H2O = glycerol + (9Z)-octadecenoate + H(+). Its function is as follows. Hydrolyzes the sn-1 position of glycerophospholipids with high specificity towards phosphatidylserine (PS), PS-PLA1 enzyme. Also hydrolyzes the acyl chain of glycerolipids with a preference for the monoacylglycerol (MAG) 1-acylglycerol, MAG lipase. Plays a regulatory role in cellular lipid homeostasis by modulating genes involved in neutral lipid degradation and in phospholipid synthesis and composition. The protein is ABHD16B of Mus musculus (Mouse).